The chain runs to 369 residues: Dihydroorotate dehydrogenase (quinone) (369 aa).

Residues 76-80 and Thr-100 contribute to the FMN site; that span reads AGLDK. Position 80 (Lys-80) interacts with substrate. A substrate-binding site is contributed by 125 to 129; that stretch reads NRMGF. Positions 154 and 187 each coordinate FMN. A substrate-binding site is contributed by Asn-187. Ser-190 functions as the Nucleophile in the catalytic mechanism. Asn-192 provides a ligand contact to substrate. The FMN site is built by Lys-232 and Ser-260. Residue 261–262 coordinates substrate; the sequence is NT. FMN is bound by residues Gly-282, Gly-311, and 332–333; that span reads YS.

It belongs to the dihydroorotate dehydrogenase family. Type 2 subfamily. Monomer. Requires FMN as cofactor.

The protein localises to the cell membrane. It carries out the reaction (S)-dihydroorotate + a quinone = orotate + a quinol. The protein operates within pyrimidine metabolism; UMP biosynthesis via de novo pathway; orotate from (S)-dihydroorotate (quinone route): step 1/1. Catalyzes the conversion of dihydroorotate to orotate with quinone as electron acceptor. The sequence is that of Dihydroorotate dehydrogenase (quinone) (pyrD) from Deinococcus radiodurans (strain ATCC 13939 / DSM 20539 / JCM 16871 / CCUG 27074 / LMG 4051 / NBRC 15346 / NCIMB 9279 / VKM B-1422 / R1).